A 76-amino-acid polypeptide reads, in one-letter code: Omega-conotoxin-like TxO3 (76 aa).

A signal peptide spans 1–22 (MKLTCVVIVAVLFLTAWTFVTA). A propeptide spanning residues 23-52 (VPHSSNALENLYLKAHHEMNNPEASELNKR) is cleaved from the precursor. 3 disulfide bridges follow: C53-C67, C60-C71, and C66-C75.

This sequence belongs to the conotoxin O1 superfamily. Expressed by the venom duct.

It localises to the secreted. Functionally, omega-conotoxins act at presynaptic membranes, they bind and block voltage-gated calcium channels (Cav). This Conus textile (Cloth-of-gold cone) protein is Omega-conotoxin-like TxO3 (TXO3).